Consider the following 277-residue polypeptide: MLLLLAITAVVSATMVHPSAVVPQPAAPLHVVPPQQQMGMVNGCTSKKLEGAEIMRRNMIECQKRSSEATKAMIERANEKAVESFNKEVSKGPSQKDGGQCIEKAVQGTDRCILAGIIDKAVNKRKYRISDVENSTSLYRGDKLIALIVNVDYGLQPITKPKKKKSKIMANLPQPKREMYFNQIGQLVGARGTFPQENKEDCKPCEGPKKTVETTSEKCNLGCELKGTSALISKAIQKKEVKDTKEGEKSASQDSDGEGTAEDAEVQQPSADGEGLE.

Positions 1 to 18 (MLLLLAITAVVSATMVHP) are cleaved as a signal peptide. N-linked (GlcNAc...) asparagine glycosylation is present at N134. A compositionally biased stretch (basic and acidic residues) spans 237-251 (QKKEVKDTKEGEKSA). The tract at residues 237–277 (QKKEVKDTKEGEKSASQDSDGEGTAEDAEVQQPSADGEGLE) is disordered. Positions 255–265 (SDGEGTAEDAE) are enriched in acidic residues.

As to quaternary structure, interacts with PTP1 and PTP3.

Its subcellular location is the spore polar tube. Functionally, involved in formation of a polar tube through which the infectious agent is passed on to the host cell. This is Polar tube protein 2 (PTP2) from Encephalitozoon cuniculi (strain GB-M1) (Microsporidian parasite).